The following is a 678-amino-acid chain: Growth arrest-specific protein 6 (678 aa).

The signal sequence occupies residues 1-30 (MAPSLSPGPAALRRAPQLLLLLLAAECALA). One can recognise a Gla domain in the interval 53 to 94 (FEEAKQGHLERECVEELCSREEAREVFENDPETDYFYPRYLD). An intrachain disulfide couples Cys-65 to Cys-70. Ser-71 carries the post-translational modification Phosphoserine; by FAM20C. Residues 116–154 (LPDQCTPNPCDRKGTQACQDLMGNFFCLCKAGWGGRLCD) form the EGF-like 1; calcium-binding domain. 14 disulfide bridges follow: Cys-120/Cys-133, Cys-125/Cys-142, Cys-144/Cys-153, Cys-160/Cys-171, Cys-167/Cys-180, Cys-182/Cys-195, Cys-201/Cys-212, Cys-207/Cys-221, Cys-223/Cys-236, Cys-242/Cys-251, Cys-247/Cys-260, Cys-262/Cys-277, Cys-283/Cys-570, and Cys-444/Cys-470. One can recognise an EGF-like 2; calcium-binding domain in the interval 156–196 (DVNECSQENGGCLQICHNKPGSFHCSCHSGFELSSDGRTCQ). An EGF-like 3; calcium-binding domain is found at 197-237 (DIDECADSEACGEARCKNLPGSYSCLCDEGFAYSSQEKACR). Residues 238 to 278 (DVDECLQGRCEQVCVNSPGSYTCHCDGRGGLKLSQDMDTCE) enclose the EGF-like 4; calcium-binding domain. Laminin G-like domains follow at residues 298–470 (GRMF…RMQC) and 477–670 (GSFY…AHSC). Asp-329 and Glu-331 together coordinate Ca(2+). N-linked (GlcNAc...) asparagine glycosylation is present at Asn-420. Arg-440 contributes to the Ca(2+) binding site. Residues Thr-621 and Thr-637 each carry the phosphothreonine modification. Residue Tyr-640 is modified to Phosphotyrosine. A disulfide bridge links Cys-643 with Cys-670. Asp-656 is a binding site for Ca(2+).

As to quaternary structure, heterodimer and heterotetramer with AXL. In terms of processing, proteolytically processed after secretion to yield a N-terminal 36 kDa protein and a C-terminal 50 kDa protein including the laminin G-like domains which activates AXL. Post-translationally, gamma-carboxyglutamate residues are formed by vitamin K dependent carboxylation. These residues are essential for the binding of calcium. Plasma. Isoform 1 and isoform 2 are widely expressed, isoform 1 being expressed at higher levels than isoform 2 in most tissues. Isoform 2 is the predominant form in spleen.

The protein localises to the secreted. Its function is as follows. Ligand for tyrosine-protein kinase receptors AXL, TYRO3 and MER whose signaling is implicated in cell growth and survival, cell adhesion and cell migration. GAS6/AXL signaling plays a role in various processes such as endothelial cell survival during acidification by preventing apoptosis, optimal cytokine signaling during human natural killer cell development, hepatic regeneration, gonadotropin-releasing hormone neuron survival and migration, platelet activation, or regulation of thrombotic responses. In terms of biological role, (Microbial infection) Can bridge virus envelope phosphatidylserine to the TAM receptor tyrosine kinase Axl to mediate viral entry by apoptotic mimicry. Plays a role in Dengue cell entry by apoptotic mimicry. Plays a role in Vaccinia virus cell entry by apoptotic mimicry. Plays a role in ebolavirus and marburgvirus cell entry by apoptotic mimicry. This chain is Growth arrest-specific protein 6, found in Homo sapiens (Human).